The chain runs to 583 residues: PTS system lactose-specific EIICB component (583 aa).

Residues 8 to 409 (IEKGKPFFEK…VVDVMIYYPF (402 aa)) form the PTS EIIC type-3 domain. 9 helical membrane-spanning segments follow: residues 30-50 (GFIAAIPIILFSSIFILITYV), 64-84 (GILMKPYNYTMGIVGLIVAGT), 103-123 (INFISTMMAAMSGFLFLAADP), 137-157 (KGLLTAFISAFITVIVYNFFI), 176-196 (VFKDIFPLSAVIIIIYALDLL), 222-242 (GWIGVTLIFGAFAFFWFVGIH), 283-303 (FVATMGGTGATLVVPFMFMWL), 339-359 (VFFIPFIFAPIVNVWIFKFFV), and 381-401 (IVMGTGFAFWSFVLAIVLIVV). Low complexity predominate over residues 453–462 (ANETTTTESA). A disordered region spans residues 453–475 (ANETTTTESAPSDEEVSAKNSSN). A PTS EIIB type-3 domain is found at 480–583 (QTNVLVLCAG…LDFVQQQFEK (104 aa)). Residue C487 is the Phosphocysteine intermediate; for EIIB activity of the active site. C487 carries the post-translational modification Phosphocysteine; by EIIA.

Its subcellular location is the cell membrane. The catalysed reaction is lactose(out) + N(pros)-phospho-L-histidyl-[protein] = lactose 6-phosphate(in) + L-histidyl-[protein]. The phosphoenolpyruvate-dependent sugar phosphotransferase system (sugar PTS), a major carbohydrate active transport system, catalyzes the phosphorylation of incoming sugar substrates concomitantly with their translocation across the cell membrane. The enzyme II LacEF PTS system is involved in lactose transport. The protein is PTS system lactose-specific EIICB component of Staphylococcus haemolyticus (strain JCSC1435).